The chain runs to 156 residues: Cyanate hydratase (156 aa).

Catalysis depends on residues arginine 96, glutamate 99, and serine 122.

It belongs to the cyanase family.

It carries out the reaction cyanate + hydrogencarbonate + 3 H(+) = NH4(+) + 2 CO2. Catalyzes the reaction of cyanate with bicarbonate to produce ammonia and carbon dioxide. The polypeptide is Cyanate hydratase (Burkholderia thailandensis (strain ATCC 700388 / DSM 13276 / CCUG 48851 / CIP 106301 / E264)).